Here is a 318-residue protein sequence, read N- to C-terminus: Taste receptor type 2 member 60 (318 aa).

The Extracellular segment spans residues 1–7 (MNGDHMV). Residues 8–28 (LGSSVTDKKAIILVTILLLLR) form a helical membrane-spanning segment. The Cytoplasmic portion of the chain corresponds to 29 to 40 (LVAIAGNGFITA). Residues 41 to 61 (ALGVEWVLRRMLLPCDKLLVS) traverse the membrane as a helical segment. The Extracellular segment spans residues 62-88 (LGASRFCLQSVVMGKTIYVFLHPMAFP). The chain crosses the membrane as a helical span at residues 89 to 109 (YNPVLQFLAFQWDFLNAATLW). Residues 110–128 (SSTWLSVFYCVKIATFTHP) lie on the Cytoplasmic side of the membrane. A helical membrane pass occupies residues 129–149 (VFFWLKHKLSGWLPWMLFSSV). Residues 150–183 (GLSSFTTILFFIGNHRMYQNYLRNHLQPWNVTGD) are Extracellular-facing. Residue Asn-179 is glycosylated (N-linked (GlcNAc...) asparagine). The chain crosses the membrane as a helical span at residues 184-204 (SIRSYCEKFYLFPLKMITWTM). Residues 205–234 (PTAVFFICMILLITSLGRHRKKALLTTSGF) are Cytoplasmic-facing. A helical membrane pass occupies residues 235-255 (REPSVQAHIKALLALLSFAML). Residues 256 to 264 (FISYFLSLV) lie on the Extracellular side of the membrane. Residues 265–285 (FSAAGIFPPLDFKFWVWESVI) traverse the membrane as a helical segment. Residues 286 to 318 (YLCAAVHPIILLFSNCRLRAVLKSRRSSRCGTP) lie on the Cytoplasmic side of the membrane.

The protein belongs to the G-protein coupled receptor T2R family. Expressed in subsets of taste receptor cells of the tongue and exclusively in gustducin-positive cells.

It is found in the membrane. In terms of biological role, receptor that may play a role in the perception of bitterness and is gustducin-linked. May play a role in sensing the chemical composition of the gastrointestinal content. The activity of this receptor may stimulate alpha gustducin, mediate PLC-beta-2 activation and lead to the gating of TRPM5. The protein is Taste receptor type 2 member 60 (TAS2R60) of Homo sapiens (Human).